The sequence spans 679 residues: Transmembrane protein 214-B (679 aa).

The interval 1-94 (MASGAPDGKW…KKKPQSGDSV (94 aa)) is disordered. Residues 18 to 30 (KSGERREGERKAL) show a composition bias toward basic and acidic residues. Asparagine 70, asparagine 298, and asparagine 322 each carry an N-linked (GlcNAc...) asparagine glycan. Helical transmembrane passes span 468–488 (GGFP…GSVL) and 606–626 (LLLH…EAAV).

It belongs to the TMEM214 family. As to quaternary structure, constitutively interacts with CASP4; required for the localization of procaspase 4 to the ER.

Its subcellular location is the endoplasmic reticulum membrane. Functionally, critical mediator, in cooperation with CASP4, of endoplasmic reticulum-stress induced apoptosis. Required or the activation of CASP4 following endoplasmic reticulum stress. This is Transmembrane protein 214-B (tmem214-b) from Xenopus laevis (African clawed frog).